The following is a 604-amino-acid chain: Glucose oxidase 2 (604 aa).

The signal sequence occupies residues M1–A16. Positions 49 and 50 each coordinate FAD. N-linked (GlcNAc...) asparagine glycosylation occurs at N63. E70 contacts FAD. N109 carries an N-linked (GlcNAc...) asparagine glycan. Residues S123, N127, G128, and S130 each contribute to the FAD site. A disulfide bridge links C184 with C226. N214 is a glycosylation site (N-linked (GlcNAc...) asparagine). Residue V270 coordinates FAD. N-linked (GlcNAc...) asparagine glycans are attached at residues N375, N408, and N517. H536 (proton acceptor) is an active-site residue. The O2 site is built by R557 and V558. G569 and M581 together coordinate FAD. N600 is a glycosylation site (N-linked (GlcNAc...) asparagine).

Belongs to the GMC oxidoreductase family. In terms of assembly, homodimer. The cofactor is FAD.

The protein localises to the secreted. The protein resides in the cell wall. Its subcellular location is the cytoplasm. It localises to the extracellular space. It is found in the extracellular matrix. It catalyses the reaction beta-D-glucose + O2 = D-glucono-1,5-lactone + H2O2. Glucose oxidase catalyzes the oxidation of beta-D-glucose to D-glucono-delta-lactone and hydrogen peroxide in the presence of molecular oxygen. D-glucono-delta-lactone is sequentially hydrolyzed by lactonase to D-gluconic acid, and the resulting hydrogen peroxide is hydrolyzed by catalase to oxygen and water. Acts as a key factor contributing to fungal disease of apple. The production of gluconic acid leads to host tissue acidification that enhances the expression of pectolytic enzymes and the establishment of conditions for necrotrophic development of P.expansum. The sequence is that of Glucose oxidase 2 from Penicillium expansum (Blue mold rot fungus).